The sequence spans 121 residues: Large ribosomal subunit protein eL18 (121 aa).

This sequence belongs to the eukaryotic ribosomal protein eL18 family.

In Methanocaldococcus jannaschii (strain ATCC 43067 / DSM 2661 / JAL-1 / JCM 10045 / NBRC 100440) (Methanococcus jannaschii), this protein is Large ribosomal subunit protein eL18.